The sequence spans 225 residues: Holliday junction branch migration complex subunit RuvA (225 aa).

A domain I region spans residues 1–71; the sequence is MISWISGELV…EDSDLLFGFS (71 aa). A domain II region spans residues 72–150; sequence SKDQKNFFIE…NELKIQEEKS (79 aa). The interval 151–161 is flexible linker; that stretch reads KDEFHIKDNKI. A domain III region spans residues 161 to 225; sequence INKIVSDIEL…LDNDSSNIVR (65 aa).

This sequence belongs to the RuvA family. Homotetramer. Forms an RuvA(8)-RuvB(12)-Holliday junction (HJ) complex. HJ DNA is sandwiched between 2 RuvA tetramers; dsDNA enters through RuvA and exits via RuvB. An RuvB hexamer assembles on each DNA strand where it exits the tetramer. Each RuvB hexamer is contacted by two RuvA subunits (via domain III) on 2 adjacent RuvB subunits; this complex drives branch migration. In the full resolvosome a probable DNA-RuvA(4)-RuvB(12)-RuvC(2) complex forms which resolves the HJ.

It localises to the cytoplasm. Its function is as follows. The RuvA-RuvB-RuvC complex processes Holliday junction (HJ) DNA during genetic recombination and DNA repair, while the RuvA-RuvB complex plays an important role in the rescue of blocked DNA replication forks via replication fork reversal (RFR). RuvA specifically binds to HJ cruciform DNA, conferring on it an open structure. The RuvB hexamer acts as an ATP-dependent pump, pulling dsDNA into and through the RuvAB complex. HJ branch migration allows RuvC to scan DNA until it finds its consensus sequence, where it cleaves and resolves the cruciform DNA. The sequence is that of Holliday junction branch migration complex subunit RuvA from Prochlorococcus marinus (strain MIT 9312).